The chain runs to 598 residues: Beta-fructofuranosidase, insoluble isoenzyme 2 (598 aa).

The first 25 residues, 1 to 25 (MGVLGSRVAWAWLVQLLLLQQLAGA), serve as a signal peptide directing secretion. D69 is an active-site residue. N-linked (GlcNAc...) asparagine glycosylation is found at N164, N189, and N348.

It belongs to the glycosyl hydrolase 32 family.

The protein localises to the secreted. The protein resides in the extracellular space. It localises to the apoplast. It is found in the cell wall. It carries out the reaction Hydrolysis of terminal non-reducing beta-D-fructofuranoside residues in beta-D-fructofuranosides.. Functionally, may play a role in sucrose partitioning during seed development. In Oryza sativa subsp. indica (Rice), this protein is Beta-fructofuranosidase, insoluble isoenzyme 2 (CIN2).